Consider the following 362-residue polypeptide: Phosphoserine aminotransferase (362 aa).

The L-glutamate site is built by Ser9 and Arg42. Pyridoxal 5'-phosphate is bound by residues 76-77 (AR), Trp102, Thr153, Asp174, and Gln197. Lys198 is subject to N6-(pyridoxal phosphate)lysine. Position 239 to 240 (239 to 240 (NT)) interacts with pyridoxal 5'-phosphate.

The protein belongs to the class-V pyridoxal-phosphate-dependent aminotransferase family. SerC subfamily. In terms of assembly, homodimer. Pyridoxal 5'-phosphate serves as cofactor.

It localises to the cytoplasm. It catalyses the reaction O-phospho-L-serine + 2-oxoglutarate = 3-phosphooxypyruvate + L-glutamate. It carries out the reaction 4-(phosphooxy)-L-threonine + 2-oxoglutarate = (R)-3-hydroxy-2-oxo-4-phosphooxybutanoate + L-glutamate. The protein operates within amino-acid biosynthesis; L-serine biosynthesis; L-serine from 3-phospho-D-glycerate: step 2/3. It functions in the pathway cofactor biosynthesis; pyridoxine 5'-phosphate biosynthesis; pyridoxine 5'-phosphate from D-erythrose 4-phosphate: step 3/5. Catalyzes the reversible conversion of 3-phosphohydroxypyruvate to phosphoserine and of 3-hydroxy-2-oxo-4-phosphonooxybutanoate to phosphohydroxythreonine. This chain is Phosphoserine aminotransferase, found in Photorhabdus laumondii subsp. laumondii (strain DSM 15139 / CIP 105565 / TT01) (Photorhabdus luminescens subsp. laumondii).